A 593-amino-acid polypeptide reads, in one-letter code: High affinity cGMP-specific 3',5'-cyclic phosphodiesterase 9A (593 aa).

The disordered stretch occupies residues 87-142 (SAGVEDKRTTSRGQSAERPLRDRRVVGLEQPRREGAFESGQVEPRPREPQGCCQEG). The segment covering 104–122 (RPLRDRRVVGLEQPRREGA) has biased composition (basic and acidic residues). The PDEase domain occupies 236–557 (PRRDVPTYPK…DRYEELKRID (322 aa)). Catalysis depends on His-312, which acts as the Proton donor. Position 312-316 (312-316 (HNFRH)) interacts with 3',5'-cyclic GMP. Zn(2+) contacts are provided by His-316, His-352, and Asp-353. Residue Asp-353 coordinates 3',5'-cyclic GMP. Mg(2+) is bound at residue Asp-353. Ser-379 is modified (phosphoserine). Residues Asp-462, Tyr-484, and 512 to 513 (AQ) each bind 3',5'-cyclic GMP. Asp-462 serves as a coordination point for Zn(2+). The tract at residues 564–593 (QKKTDSLTSGATEKSRERSRDVKNSEGDCA) is disordered. Basic and acidic residues predominate over residues 576-593 (EKSRERSRDVKNSEGDCA).

This sequence belongs to the cyclic nucleotide phosphodiesterase family. PDE9 subfamily. As to quaternary structure, homodimer. Zn(2+) is required as a cofactor. The cofactor is Mg(2+).

The protein localises to the cell projection. It is found in the ruffle membrane. It localises to the cytoplasm. The protein resides in the perinuclear region. Its subcellular location is the golgi apparatus. The protein localises to the endoplasmic reticulum. It is found in the cell membrane. It localises to the sarcolemma. It carries out the reaction 3',5'-cyclic GMP + H2O = GMP + H(+). Its pathway is purine metabolism; 3',5'-cyclic GMP degradation; GMP from 3',5'-cyclic GMP: step 1/1. Specifically inhibited by a compound named 3r ((R)-2-((1-cyclopentyl-4-hydroxy-1H-pyrazolo[3,4-d]pyrimidin-6- yl)amino)-N-(4-methoxyphenyl)propanamide); the inhibitor forms a hydrogen bond with Tyr-484, Ala-512 and Gln-513. Its function is as follows. Specifically hydrolyzes the second messenger cGMP, which is a key regulator of many important physiological processes. Highly specific: compared to other members of the cyclic nucleotide phosphodiesterase family, has the highest affinity and selectivity for cGMP. Specifically regulates natriuretic-peptide-dependent cGMP signaling in heart, acting as a regulator of cardiac hypertrophy in myocytes and muscle. Does not regulate nitric oxide-dependent cGMP in heart. Additional experiments are required to confirm whether its ability to hydrolyze natriuretic-peptide-dependent cGMP is specific to heart or is a general feature of the protein. In brain, involved in cognitive function, such as learning and long-term memory. In Pan troglodytes (Chimpanzee), this protein is High affinity cGMP-specific 3',5'-cyclic phosphodiesterase 9A (PDE9A).